The chain runs to 175 residues: Arginine repressor (175 aa).

The interval 1–23 (MSVSTPERGGAEQGKGPAIARTR) is disordered.

This sequence belongs to the ArgR family.

The protein localises to the cytoplasm. It participates in amino-acid biosynthesis; L-arginine biosynthesis [regulation]. In terms of biological role, regulates arginine biosynthesis genes. This is Arginine repressor from Nocardia farcinica (strain IFM 10152).